The sequence spans 415 residues: Tyrosine--tRNA ligase (415 aa).

Residue Tyr34 participates in L-tyrosine binding. Residues 39–48 carry the 'HIGH' region motif; the sequence is PTADSLHLGH. L-tyrosine-binding residues include Tyr164 and Gln168. The 'KMSKS' region signature appears at 226–230; the sequence is KFGKS. Lys229 contributes to the ATP binding site. Residues 348–415 form the S4 RNA-binding domain; the sequence is KNIVDFLVDG…KKKYFLGKIK (68 aa).

The protein belongs to the class-I aminoacyl-tRNA synthetase family. TyrS type 1 subfamily. As to quaternary structure, homodimer.

It localises to the cytoplasm. The enzyme catalyses tRNA(Tyr) + L-tyrosine + ATP = L-tyrosyl-tRNA(Tyr) + AMP + diphosphate + H(+). Catalyzes the attachment of tyrosine to tRNA(Tyr) in a two-step reaction: tyrosine is first activated by ATP to form Tyr-AMP and then transferred to the acceptor end of tRNA(Tyr). This chain is Tyrosine--tRNA ligase, found in Leuconostoc citreum (strain KM20).